We begin with the raw amino-acid sequence, 388 residues long: MTAIIRQFLKLEAAGGLLLIITAIIALIMANSPLQGIYQQFLNISVAVQFAALEINKPLLLWINDGLMAVFFLIVGLEVKRELLEGSLAGRDKALFPVIAAIGGMVAPALIYLLFNGNDEFTRQGWAIPAATDIAFALGVMALLSKRVPTELKVFLLALAIIDDLGVIVIIALFYTKTVSLVALGLSAAMIALLVWMNWRGVEKTSAYLAVGAILWVCILKSGVHATLAGVIVGFLIPLRGQNGHSPSELLEHGLHPWVAYLILPLFAFANAGVALNGVTLNGLTDILPLGIAVALFLGKPLGIFLFSYISIQIGFAKLPQQINLKQIFAVSVLCGIGFTMSIFISGLAFEGVDESFSVYSRLGILMGSTIAAFMGYGLLRMVLPKKK.

The next 12 helical transmembrane spans lie at 8 to 28 (FLKL…IALI), 33 to 53 (PLQG…FAAL), 59 to 79 (LLLW…GLEV), 95 to 115 (LFPV…YLLF), 125 to 145 (GWAI…ALLS), 154 to 174 (VFLL…IALF), 179 to 199 (VSLV…WMNW), 217 to 237 (VCIL…GFLI), 259 to 279 (VAYL…LNGV), 287 to 307 (ILPL…IFLF), 328 to 348 (IFAV…ISGL), and 363 to 383 (LGIL…LRMV).

This sequence belongs to the NhaA Na(+)/H(+) (TC 2.A.33) antiporter family.

It is found in the cell inner membrane. It carries out the reaction Na(+)(in) + 2 H(+)(out) = Na(+)(out) + 2 H(+)(in). Na(+)/H(+) antiporter that extrudes sodium in exchange for external protons. The polypeptide is Na(+)/H(+) antiporter NhaA (Photorhabdus laumondii subsp. laumondii (strain DSM 15139 / CIP 105565 / TT01) (Photorhabdus luminescens subsp. laumondii)).